The sequence spans 460 residues: Cysteine--tRNA ligase (460 aa).

Cys28 lines the Zn(2+) pocket. Residues 30-40 (NTVYDFCHIGH) carry the 'HIGH' region motif. Residues Cys209, His234, and Glu238 each coordinate Zn(2+). A 'KMSKS' region motif is present at residues 266–270 (KMSKS). Lys269 provides a ligand contact to ATP.

Belongs to the class-I aminoacyl-tRNA synthetase family. As to quaternary structure, monomer. Zn(2+) is required as a cofactor.

The protein localises to the cytoplasm. The enzyme catalyses tRNA(Cys) + L-cysteine + ATP = L-cysteinyl-tRNA(Cys) + AMP + diphosphate. This chain is Cysteine--tRNA ligase, found in Marinomonas sp. (strain MWYL1).